Here is a 316-residue protein sequence, read N- to C-terminus: CD-NTase-associated protein 12 (316 aa).

The 118-residue stretch at 4–121 (RIFIGSSSEG…MLGITQTRYE (118 aa)) folds into the TIR domain. The segment at 161 to 316 (STVIAISYFE…ECVEIIEPQP (156 aa)) is STING domain. 3 residues coordinate 3',3'-c-di-GMP: Phe172, Pro237, and Asp253.

The protein in the C-terminal section; belongs to the bacterial STING family. Forms homodimers; in the presence of c-di-GMP forms filaments with an ordered array of parallel-stacked subunits.

The enzyme catalyses NAD(+) + H2O = ADP-D-ribose + nicotinamide + H(+). With respect to regulation, NAD(+) hydrolase activity is strongly stimulated by c-di-GMP, weakly by 3'3'-cGAMP, very weakly by c-di-AMP but not at all by 2'3'-cGAMP. Self-association of TIR domains is required for NADase activity. In terms of biological role, effector protein of a CBASS antiviral system with NAD(+) hydrolase activity. CBASS (cyclic oligonucleotide-based antiphage signaling system) provides immunity against bacteriophage. The CD-NTase protein synthesizes cyclic nucleotides in response to infection; these serve as specific second messenger signals. The signals activate a diverse range of effectors, leading to bacterial cell death and thus abortive phage infection. A type I-D(GG) CBASS system. Functionally, binds c-di-GMP (synthesized by the cognate CdnE encoded upstream in the same operon) but not c-di-AMP, 2'-3'-cGAMP, 3'-3'-cGAMP or cUMP-AMP (tested without the N-terminal TIR domain). Upon activation by c-di-GMP forms filaments which hydrolyze NAD(+); filament formation is required for enzyme activation. The polypeptide is CD-NTase-associated protein 12 (Lachnospiraceae bacterium (strain RUG226)).